The chain runs to 3391 residues: Genome polyprotein (3391 aa).

Residues 1–15 (MNNQRKKAKNTPFNM) are interaction with host EXOC1. Residues 1–101 (MNNQRKKAKN…LNILNRRRRS (101 aa)) are Cytoplasmic-facing. Residues 37–72 (MLQGRGPLKLFMALVAFLRFLTIPPTAGILKRWGTI) are hydrophobic; homodimerization of capsid protein C. Positions 101–114 (SAGMIIMLIPTVMA) are cleaved as a propeptide — ER anchor for the capsid protein C, removed in mature form by serine protease NS3. The helical transmembrane segment at 102 to 122 (AGMIIMLIPTVMAFHLTTRNG) threads the bilayer. At 123-238 (EPHMIVSRQE…GAWKHAQRIE (116 aa)) the chain is on the extracellular side. An N-linked (GlcNAc...) asparagine; by host glycan is attached at N183. A helical membrane pass occupies residues 239–259 (TWILRHPGFTIMAAILAYTIG). At 260-265 (TTHFQR) the chain is on the cytoplasmic side. Residues 266–280 (ALIFILLTAVAPSMT) traverse the membrane as a helical segment. At 281–725 (MRCIGISNRD…LHQVFGAIYG (445 aa)) the chain is on the extracellular side. 4 cysteine pairs are disulfide-bonded: C283-C310, C340-C401, C354-C385, and C372-C396. N347 carries N-linked (GlcNAc...) asparagine; by host glycosylation. The segment at 378–391 (DRGWGNGCGLFGKG) is fusion peptide. N433 carries an N-linked (GlcNAc...) asparagine; by host glycan. Cystine bridges form between C465–C565 and C582–C613. A helical transmembrane segment spans residues 726–746 (AAFSGVSWTMKILIGVIITWI). At 747 to 752 (GMNSRS) the chain is on the cytoplasmic side. The chain crosses the membrane as a helical span at residues 753 to 773 (TSLSVSLVLVGIVTLYLGVMV). At 774–1195 (QADSGCVVSW…MVGATMTDDI (422 aa)) the chain is on the extracellular side. Disulfide bonds link C779/C790, C830/C918, C954/C998, C1055/C1104, C1066/C1088, and C1087/C1091. N905 and N982 each carry an N-linked (GlcNAc...) asparagine; by host glycan. An N-linked (GlcNAc...) asparagine; by host glycan is attached at N1134. Residues 1196–1220 (GMGVTYLALLAAFKVRPTFAAGLLL) form a helical membrane-spanning segment. Residues 1221–1226 (RKLTSK) lie on the Cytoplasmic side of the membrane. Residues 1227-1245 (ELMMTTIGIVLLSQSTIPE) traverse the membrane as a helical segment. At 1246-1269 (TILELTDALALGMMVLKMVRNMEK) the chain is on the lumenal side. The helical transmembrane segment at 1270–1290 (YQLAVTIMAILCVPNAVILQN) threads the bilayer. A topological domain (cytoplasmic) is located at residue A1291. Residues 1292-1310 (WKVSCTILAVVSVSPLLLT) form a helical membrane-spanning segment. Over 1311 to 1317 (SSQQKTD) the chain is Lumenal. Residues 1318-1338 (WIPLALTIKGLNPTAIFLTTL) traverse the membrane as a helical segment. Residues 1339-1346 (SRTSKKRS) are Cytoplasmic-facing. Residues 1347–1367 (WPLNEAIMAVGMVSILASSLL) traverse the membrane as a helical segment. Over 1368 to 1370 (KND) the chain is Lumenal. The helical transmembrane segment at 1371–1391 (IPMTGPLVAGGLLTVCYVLTG) threads the bilayer. The Cytoplasmic portion of the chain corresponds to 1392–1447 (RSADLELERAADVKWEDQAEISGSSPILSITISEDGSMSIKNEEEEQTLTILIRTG). Positions 1398–1437 (LERAADVKWEDQAEISGSSPILSITISEDGSMSIKNEEEE) are interacts with and activates NS3 protease. The segment at residues 1448 to 1468 (LLVISGLFPVSIPITAAAWYL) is an intramembrane region (helical). Over 1469 to 2147 (WEVKKQRAGV…LSELPETLET (679 aa)) the chain is Cytoplasmic. Residues 1476-1653 (AGVLWDVPSP…EKSIEDNPEI (178 aa)) form the Peptidase S7 domain. Residues H1526, D1550, and S1610 each act as charge relay system; for serine protease NS3 activity in the active site. Residues 1655-1811 (DDIFRKRRLT…QSNAPIIDEE (157 aa)) enclose the Helicase ATP-binding domain. Positions 1659–1662 (RKRR) are important for RNA-binding. ATP is bound at residue 1668 to 1675 (LHPGAGKT). Residues 1759–1762 (DEAH) carry the DEAH box motif. In terms of domain architecture, Helicase C-terminal spans 1821 to 1988 (SGHEWVTDFK…IIPSMFEPER (168 aa)). K1863 is subject to N6-acetyllysine; by host. Residues 2148 to 2168 (LLLLTLLATVTGGIFLFLMSG) form a helical membrane-spanning segment. Residues 2169-2170 (RG) are Lumenal-facing. An intramembrane region (helical) is located at residues 2171–2191 (IGKMTLGMCCIITASVLLWYA). Position 2192 (Q2192) is a topological domain, lumenal. A helical membrane pass occupies residues 2193-2213 (IQPHWIAASIILEFFLIVLLI). Residues 2214-2228 (PEPEKQRTPQDNQLT) lie on the Cytoplasmic side of the membrane. The chain crosses the membrane as a helical span at residues 2229–2249 (YVVIAILTVVAATMANEMGFL). The Lumenal segment spans residues 2250 to 2274 (EKTKKDLGLGSIATQQPESNILDID). Positions 2275–2295 (LRPASAWTLYAVATTFVTPML) form an intramembrane region, helical. Residues 2296-2316 (RHSIENSSVNVSLTAIANQAT) lie on the Lumenal side of the membrane. Residues N2301 and N2305 are each glycosylated (N-linked (GlcNAc...) asparagine; by host). An intramembrane region (helical) is located at residues 2317–2337 (VLMGLGKGWPLSKMDIGVPLL). Residues 2338–2347 (AIGCYSQVNP) are Lumenal-facing. A helical membrane pass occupies residues 2348 to 2368 (ITLTAALLLLVAHYAIIGPGL). Residues 2369 to 2413 (QAKATREAQKRAAAGIMKNPTVDGITVIDLDPIPYDPKFEKQLGQ) are Cytoplasmic-facing. Residues 2414–2434 (VMLLVLCVTQVLMMRTTWALC) form a helical membrane-spanning segment. The Lumenal segment spans residues 2435-2459 (EALTLATGPISTLWEGNPGRFWNTT). N-linked (GlcNAc...) asparagine; by host glycosylation occurs at N2457. Residues 2460–2480 (IAVSMANIFRGSYLAGAGLLF) form a helical membrane-spanning segment. Residues 2481–3391 (SIMKNTTNTR…REEEEAGVLW (911 aa)) are Cytoplasmic-facing. An mRNA cap 0-1 NS5-type MT domain is found at 2493-2755 (TGNIGETLGE…DVDLGSGTRN (263 aa)). S2547 serves as a coordination point for S-adenosyl-L-methionine. S2547 is subject to Phosphoserine. Catalysis depends on K2552, which acts as the For 2'-O-MTase activity. The SUMO-interacting motif motif lies at 2568 to 2571 (VVDL). The S-adenosyl-L-methionine site is built by G2577, W2578, T2595, K2596, D2622, and V2623. Catalysis depends on D2637, which acts as the For 2'-O-MTase activity. I2638 contacts S-adenosyl-L-methionine. Residues K2672 and E2708 each act as for 2'-O-MTase activity in the active site. Y2710 lines the S-adenosyl-L-methionine pocket. Residues E2929, H2933, C2938, and C2941 each contribute to the Zn(2+) site. The region spanning 3020 to 3169 (AMYADDTAGW…PLDDRFASAL (150 aa)) is the RdRp catalytic domain. Residues H3203, C3219, and C3338 each coordinate Zn(2+).

It in the N-terminal section; belongs to the class I-like SAM-binding methyltransferase superfamily. mRNA cap 0-1 NS5-type methyltransferase family. Homodimer. Interacts (via N-terminus) with host EXOC1 (via C-terminus); this interaction results in EXOC1 degradation through the proteasome degradation pathway. As to quaternary structure, forms heterodimers with envelope protein E in the endoplasmic reticulum and Golgi. In terms of assembly, homodimer; in the endoplasmic reticulum and Golgi. Interacts with protein prM. Interacts with non-structural protein 1. Homodimer; Homohexamer when secreted. Interacts with envelope protein E. Interacts with host PRKAA1. As to quaternary structure, interacts (via N-terminus) with serine protease NS3. In terms of assembly, forms a heterodimer with serine protease NS3. May form homooligomers. Forms a heterodimer with NS2B. Interacts with NS4B. Interacts with unphosphorylated RNA-directed RNA polymerase NS5; this interaction stimulates RNA-directed RNA polymerase NS5 guanylyltransferase activity. Interacts with host SHFL. As to quaternary structure, interacts with host MAVS; this interaction inhibits the synthesis of IFN-beta. Interacts with host SHFL. Interacts with host AUP1; the interaction occurs in the presence of Dengue virus NS4B and induces lipophagy which facilitates production of virus progeny particles. May interact with host SRPRA and SEC61G. In terms of assembly, interacts with serine protease NS3. Homodimer. Interacts with host STAT2; this interaction inhibits the phosphorylation of the latter, and, when all viral proteins are present (polyprotein), targets STAT2 for degradation. Interacts with serine protease NS3. Interacts with host PAF1 complex; the interaction may prevent the recruitment of the PAF1 complex to interferon-responsive genes, and thus reduces the immune response. Post-translationally, specific enzymatic cleavages in vivo yield mature proteins. Cleavages in the lumen of endoplasmic reticulum are performed by host signal peptidase, whereas cleavages in the cytoplasmic side are performed by serine protease NS3. Signal cleavage at the 2K-4B site requires a prior NS3 protease-mediated cleavage at the 4A-2K site. Cleaved in post-Golgi vesicles by a host furin, releasing the mature small envelope protein M, and peptide pr. This cleavage is incomplete as up to 30% of viral particles still carry uncleaved prM. In terms of processing, N-glycosylated. Post-translationally, N-glycosylated. The excreted form is glycosylated and this is required for efficient secretion of the protein from infected cells. Acetylated by host KAT5. Acetylation modulates NS3 RNA-binding and unwinding activities and plays an important positive role for viral replication. In terms of processing, phosphorylated on serines residues. This phosphorylation may trigger NS5 nuclear localization. Post-translationally, sumoylation of RNA-directed RNA polymerase NS5 increases NS5 protein stability allowing proper viral RNA replication.

It localises to the virion. Its subcellular location is the host nucleus. It is found in the host cytoplasm. The protein localises to the host perinuclear region. The protein resides in the secreted. It localises to the virion membrane. Its subcellular location is the host endoplasmic reticulum membrane. It is found in the host mitochondrion. It catalyses the reaction Selective hydrolysis of -Xaa-Xaa-|-Yaa- bonds in which each of the Xaa can be either Arg or Lys and Yaa can be either Ser or Ala.. It carries out the reaction RNA(n) + a ribonucleoside 5'-triphosphate = RNA(n+1) + diphosphate. The enzyme catalyses a ribonucleoside 5'-triphosphate + H2O = a ribonucleoside 5'-diphosphate + phosphate + H(+). The catalysed reaction is ATP + H2O = ADP + phosphate + H(+). It catalyses the reaction a 5'-end (5'-triphosphoguanosine)-ribonucleoside in mRNA + S-adenosyl-L-methionine = a 5'-end (N(7)-methyl 5'-triphosphoguanosine)-ribonucleoside in mRNA + S-adenosyl-L-homocysteine. It carries out the reaction a 5'-end (N(7)-methyl 5'-triphosphoguanosine)-ribonucleoside in mRNA + S-adenosyl-L-methionine = a 5'-end (N(7)-methyl 5'-triphosphoguanosine)-(2'-O-methyl-ribonucleoside) in mRNA + S-adenosyl-L-homocysteine + H(+). Plays a role in virus budding by binding to the cell membrane and gathering the viral RNA into a nucleocapsid that forms the core of a mature virus particle. During virus entry, may induce genome penetration into the host cytoplasm after hemifusion induced by the surface proteins. Can migrate to the cell nucleus where it modulates host functions. Overcomes the anti-viral effects of host EXOC1 by sequestering and degrading the latter through the proteasome degradation pathway. Functionally, inhibits RNA silencing by interfering with host Dicer. Its function is as follows. Prevents premature fusion activity of envelope proteins in trans-Golgi by binding to envelope protein E at pH6.0. After virion release in extracellular space, gets dissociated from E dimers. In terms of biological role, acts as a chaperone for envelope protein E during intracellular virion assembly by masking and inactivating envelope protein E fusion peptide. prM is the only viral peptide matured by host furin in the trans-Golgi network probably to avoid catastrophic activation of the viral fusion activity in acidic Golgi compartment prior to virion release. prM-E cleavage is inefficient, and many virions are only partially matured. These uncleaved prM would play a role in immune evasion. May play a role in virus budding. Exerts cytotoxic effects by activating a mitochondrial apoptotic pathway through M ectodomain. May display a viroporin activity. Functionally, binds to host cell surface receptor and mediates fusion between viral and cellular membranes. Envelope protein is synthesized in the endoplasmic reticulum in the form of heterodimer with protein prM. They play a role in virion budding in the ER, and the newly formed immature particle is covered with 60 spikes composed of heterodimer between precursor prM and envelope protein E. The virion is transported to the Golgi apparatus where the low pH causes dissociation of PrM-E heterodimers and formation of E homodimers. prM-E cleavage is inefficient, and many virions are only partially matured. These uncleaved prM would play a role in immune evasion. Its function is as follows. Involved in immune evasion, pathogenesis and viral replication. Once cleaved off the polyprotein, is targeted to three destinations: the viral replication cycle, the plasma membrane and the extracellular compartment. Essential for viral replication. Required for formation of the replication complex and recruitment of other non-structural proteins to the ER-derived membrane structures. Excreted as a hexameric lipoparticle that plays a role against host immune response. Antagonizing the complement function. Binds to the host macrophages and dendritic cells. Inhibits signal transduction originating from Toll-like receptor 3 (TLR3). Mediates complement activation, which may contribute to the pathogenesis of the vascular leakage that occurs in severe dengue disease. Activates autophagy through the AMPK/ERK/mTOR signaling pathway. Mechanistically, acts as the assembly platform for STK11-AMPK interactions and promotes STK11-AMPK interactions. In turn, promotes phosphorylation of the AMPK kinase structural domain and activates AMPK, thereby positively regulating the AMPK/ERK/mTOR signaling pathway and inducing autophagy. In terms of biological role, disrupts the host endothelial glycocalyx layer of host pulmonary microvascular endothelial cells, inducing degradation of sialic acid and shedding of heparan sulfate proteoglycans. NS1 induces expression of sialidases, heparanase, and activates cathepsin L, which activates heparanase via enzymatic cleavage. These effects are probably linked to the endothelial hyperpermeability observed in severe dengue disease. Component of the viral RNA replication complex that functions in virion assembly and antagonizes the host immune response. Functionally, required cofactor for the serine protease function of NS3. May have membrane-destabilizing activity and form viroporins. Its function is as follows. Displays three enzymatic activities: serine protease, NTPase and RNA helicase. NS3 serine protease, in association with NS2B, performs its autocleavage and cleaves the polyprotein at dibasic sites in the cytoplasm: C-prM, NS2A-NS2B, NS2B-NS3, NS3-NS4A, NS4A-2K and NS4B-NS5. NS3 RNA helicase binds RNA and unwinds dsRNA in the 3' to 5' direction. In terms of biological role, regulates the ATPase activity of the NS3 helicase activity. NS4A allows NS3 helicase to conserve energy during unwinding. Plays a role in the inhibition of the host innate immune response. Interacts with host MAVS and thereby prevents the interaction between RIGI and MAVS. In turn, IFN-beta production is impaired. Interacts with host AUP1 which mediates induction of lipophagy in host cells and facilitates production of virus progeny particles. Functions as a signal peptide for NS4B and is required for the interferon antagonism activity of the latter. Functionally, induces the formation of ER-derived membrane vesicles where the viral replication takes place. Inhibits interferon (IFN)-induced host STAT1 phosphorylation and nuclear translocation, thereby preventing the establishment of cellular antiviral state by blocking the IFN-alpha/beta pathway. Its function is as follows. Replicates the viral (+) and (-) RNA genome, and performs the capping of genomes in the cytoplasm. NS5 methylates viral RNA cap at guanine N-7 and ribose 2'-O positions. Besides its role in RNA genome replication, also prevents the establishment of cellular antiviral state by blocking the interferon-alpha/beta (IFN-alpha/beta) signaling pathway. Inhibits host TYK2 and STAT2 phosphorylation, thereby preventing activation of JAK-STAT signaling pathway. May reduce immune responses by preventing the recruitment of the host PAF1 complex to interferon-responsive genes. This Aedimorphus (Red guenon) protein is Genome polyprotein.